A 323-amino-acid chain; its full sequence is NADH-cytochrome b5 reductase 2 (323 aa).

A helical transmembrane segment spans residues 32–48 (LAPIYVAVGLTGLGVGL). The region spanning 72 to 177 (QGWVDLKLAQ…KGPIPKYPWE (106 aa)) is the FAD-binding FR-type domain. FAD is bound at residue 180-215 (KHKHICLIAGGTGITPMYQLARKIFKDPEDQTKVTL).

The protein belongs to the flavoprotein pyridine nucleotide cytochrome reductase family. FAD serves as cofactor.

Its subcellular location is the mitochondrion outer membrane. It carries out the reaction 2 Fe(III)-[cytochrome b5] + NADH = 2 Fe(II)-[cytochrome b5] + NAD(+) + H(+). Its function is as follows. May mediate the reduction of outer membrane cytochrome b5. In Neosartorya fischeri (strain ATCC 1020 / DSM 3700 / CBS 544.65 / FGSC A1164 / JCM 1740 / NRRL 181 / WB 181) (Aspergillus fischerianus), this protein is NADH-cytochrome b5 reductase 2 (mcr1).